The primary structure comprises 424 residues: Histidine--tRNA ligase (424 aa).

This sequence belongs to the class-II aminoacyl-tRNA synthetase family. In terms of assembly, homodimer.

Its subcellular location is the cytoplasm. The enzyme catalyses tRNA(His) + L-histidine + ATP = L-histidyl-tRNA(His) + AMP + diphosphate + H(+). The chain is Histidine--tRNA ligase from Staphylococcus epidermidis (strain ATCC 12228 / FDA PCI 1200).